Consider the following 289-residue polypeptide: 4-hydroxybenzoate octaprenyltransferase (289 aa).

A run of 9 helical transmembrane segments spans residues 19 to 39 (IPILLILWPTLTALVLASHGL), 42 to 62 (ISYLVIFTIGVVVMRTVGCII), 85 to 105 (GQLSIKNAIWLCISLTLVAFI), 107 to 127 (VLFLNLYTILLSFVALFLAIL), 134 to 154 (FFAIPQLILGLAFNFGIFMAF), 165 to 185 (AWIFYIATICWTIAYDTIYAL), 211 to 231 (ILLFNFLSLLLLIILGIYCDF), 233 to 253 (SFFYLGVVICSLFFVRNYFLY), and 265 to 285 (FSANHWIGLIIFIIAVIQYII).

It belongs to the UbiA prenyltransferase family. It depends on Mg(2+) as a cofactor.

Its subcellular location is the cell inner membrane. It carries out the reaction all-trans-octaprenyl diphosphate + 4-hydroxybenzoate = 4-hydroxy-3-(all-trans-octaprenyl)benzoate + diphosphate. It participates in cofactor biosynthesis; ubiquinone biosynthesis. In terms of biological role, catalyzes the prenylation of para-hydroxybenzoate (PHB) with an all-trans polyprenyl group. Mediates the second step in the final reaction sequence of ubiquinone-8 (UQ-8) biosynthesis, which is the condensation of the polyisoprenoid side chain with PHB, generating the first membrane-bound Q intermediate 3-octaprenyl-4-hydroxybenzoate. In Francisella tularensis subsp. holarctica (strain FTNF002-00 / FTA), this protein is 4-hydroxybenzoate octaprenyltransferase.